Reading from the N-terminus, the 362-residue chain is Glutamate 5-kinase (362 aa).

K3 provides a ligand contact to ATP. Residues S43, D128, and N140 each contribute to the substrate site. ATP-binding positions include 160–161 (TD) and 202–208 (TGGMRTK). One can recognise a PUA domain in the interval 267 to 348 (AGAILVDAGA…RDIENVLGYS (82 aa)).

The protein belongs to the glutamate 5-kinase family.

The protein resides in the cytoplasm. The catalysed reaction is L-glutamate + ATP = L-glutamyl 5-phosphate + ADP. It participates in amino-acid biosynthesis; L-proline biosynthesis; L-glutamate 5-semialdehyde from L-glutamate: step 1/2. In terms of biological role, catalyzes the transfer of a phosphate group to glutamate to form L-glutamate 5-phosphate. The polypeptide is Glutamate 5-kinase (Xanthomonas oryzae pv. oryzae (strain MAFF 311018)).